Reading from the N-terminus, the 530-residue chain is 4,4'-diapolycopene aldehyde oxidase (530 aa).

Active-site residues include glutamate 234 and cysteine 268.

This sequence belongs to the aldehyde dehydrogenase family.

It carries out the reaction all-trans-4,4'-diapolycopen-4-al + A + H2O = all-trans-4,4'-diapolycopen-4-oate + AH2 + H(+). It catalyses the reaction all-trans-4,4'-diapolycopene-4,4'-dial + 2 A + 2 H2O = all-trans-4,4'-diapolycopene-4,4'-dioate + 2 AH2 + 2 H(+). Its pathway is carotenoid biosynthesis. Involved in the biosynthesis of C30 carotenoids. Catalyzes the oxidation of 4,4'-diapolycopene-4,4'-dial to yield 4,4'-diapolycopene-4,4'-dioic acid. Also able to catalyze the oxidation of 4,4'-diapolycopen-4-al to yield 4,4'-diapolycopen-4-oic acid. This is 4,4'-diapolycopene aldehyde oxidase from Methylomonas sp.